The primary structure comprises 651 residues: Gag-Pro polyprotein (651 aa).

The N-myristoyl glycine; by host moiety is linked to residue Gly2. The disordered stretch occupies residues 93–142; that stretch reads QIPSRPAPPPPSSSTHDPPDSDPQIPPPYVEPTAPQVLPVMHPHGAPPNH. Residue Ser105 is modified to Phosphoserine; by host MAPK1. Residues 118–121 carry the PPXY motif motif; that stretch reads PPPY. Residues 124–127 carry the PTAP/PSAP motif motif; it reads PTAP. 2 CCHC-type zinc fingers span residues 355–372 and 378–395; these read QPCF…DCTQ and GPCP…DCPR. Residues 476-554 enclose the Peptidase A2 domain; that stretch reads IEALLDTGAD…NNWAIIGRDA (79 aa). Asp481 functions as the For protease activity; shared with dimeric partner in the catalytic mechanism. The disordered stretch occupies residues 631–651; that stretch reads SQLKKPMEPGDSSTTCGPLTL. Residues 641–651 show a composition bias toward polar residues; the sequence is DSSTTCGPLTL.

Homodimer; the homodimers are part of the immature particles. Interacts with human TSG101 and NEDD4; these interactions are essential for budding and release of viral particles. As to quaternary structure, homodimer; further assembles as homohexamers. Specific enzymatic cleavages by the viral protease yield mature proteins. The polyprotein is cleaved during and after budding, this process is termed maturation. The protease is autoproteolytically processed at its N- and C-termini. Post-translationally, phosphorylation of the matrix protein p19 by MAPK1 seems to play a role in budding. In terms of processing, myristoylated. Myristoylation of the matrix (MA) domain mediates the transport and binding of Gag polyproteins to the host plasma membrane and is required for the assembly of viral particles.

Its subcellular location is the virion. Functionally, the matrix domain targets Gag, Gag-Pro and Gag-Pro-Pol polyproteins to the plasma membrane via a multipartite membrane binding signal, that includes its myristoylated N-terminus. In terms of biological role, matrix protein. Forms the spherical core of the virus that encapsulates the genomic RNA-nucleocapsid complex. Its function is as follows. Binds strongly to viral nucleic acids and promote their aggregation. Also destabilizes the nucleic acids duplexes via highly structured zinc-binding motifs. Functionally, the aspartyl protease mediates proteolytic cleavages of Gag and Gag-Pol polyproteins during or shortly after the release of the virion from the plasma membrane. Cleavages take place as an ordered, step-wise cascade to yield mature proteins. This process is called maturation. Displays maximal activity during the budding process just prior to particle release from the cell (Potential). Cleaves the translation initiation factor eIF4G leading to the inhibition of host cap-dependent translation. The polypeptide is Gag-Pro polyprotein (gag-pro) (Human T-cell leukemia virus 1 (isolate Caribbea HS-35 subtype A) (HTLV-1)).